We begin with the raw amino-acid sequence, 225 residues long: Phosphoribosylformylglycinamidine synthase subunit PurQ (225 aa).

Residues 4–225 form the Glutamine amidotransferase type-1 domain; sequence RVGVITFPGT…YSVLDSVISA (222 aa). Cys-87 serves as the catalytic Nucleophile. Catalysis depends on residues His-196 and Glu-198.

In terms of assembly, part of the FGAM synthase complex composed of 1 PurL, 1 PurQ and 2 PurS subunits.

It is found in the cytoplasm. The catalysed reaction is N(2)-formyl-N(1)-(5-phospho-beta-D-ribosyl)glycinamide + L-glutamine + ATP + H2O = 2-formamido-N(1)-(5-O-phospho-beta-D-ribosyl)acetamidine + L-glutamate + ADP + phosphate + H(+). It catalyses the reaction L-glutamine + H2O = L-glutamate + NH4(+). It functions in the pathway purine metabolism; IMP biosynthesis via de novo pathway; 5-amino-1-(5-phospho-D-ribosyl)imidazole from N(2)-formyl-N(1)-(5-phospho-D-ribosyl)glycinamide: step 1/2. Functionally, part of the phosphoribosylformylglycinamidine synthase complex involved in the purines biosynthetic pathway. Catalyzes the ATP-dependent conversion of formylglycinamide ribonucleotide (FGAR) and glutamine to yield formylglycinamidine ribonucleotide (FGAM) and glutamate. The FGAM synthase complex is composed of three subunits. PurQ produces an ammonia molecule by converting glutamine to glutamate. PurL transfers the ammonia molecule to FGAR to form FGAM in an ATP-dependent manner. PurS interacts with PurQ and PurL and is thought to assist in the transfer of the ammonia molecule from PurQ to PurL. The polypeptide is Phosphoribosylformylglycinamidine synthase subunit PurQ (Rhodococcus jostii (strain RHA1)).